The following is an 88-amino-acid chain: Small ribosomal subunit protein bS20 (88 aa).

A disordered region spans residues 1–25 (MANSAQARKRVRQNNTRRQHAASQR). A compositionally biased stretch (basic residues) spans 7–20 (ARKRVRQNNTRRQH).

It belongs to the bacterial ribosomal protein bS20 family.

Binds directly to 16S ribosomal RNA. In Psychrobacter sp. (strain PRwf-1), this protein is Small ribosomal subunit protein bS20.